A 388-amino-acid polypeptide reads, in one-letter code: Probable protein phosphatase 2C 43 (388 aa).

A PPM-type phosphatase domain is found at 53–352 (EFSFAVVQAN…DDITVVVVFI (300 aa)). Residues Asp84, Gly85, Asp284, and Asp343 each coordinate Mn(2+).

This sequence belongs to the PP2C family. The cofactor is Mg(2+). Mn(2+) is required as a cofactor.

It carries out the reaction O-phospho-L-seryl-[protein] + H2O = L-seryl-[protein] + phosphate. It catalyses the reaction O-phospho-L-threonyl-[protein] + H2O = L-threonyl-[protein] + phosphate. This is Probable protein phosphatase 2C 43 from Oryza sativa subsp. japonica (Rice).